A 549-amino-acid polypeptide reads, in one-letter code: Glucose-6-phosphate isomerase (549 aa).

The active-site Proton donor is the E355. Active-site residues include H386 and K514.

The protein belongs to the GPI family.

It is found in the cytoplasm. It catalyses the reaction alpha-D-glucose 6-phosphate = beta-D-fructose 6-phosphate. It participates in carbohydrate biosynthesis; gluconeogenesis. The protein operates within carbohydrate degradation; glycolysis; D-glyceraldehyde 3-phosphate and glycerone phosphate from D-glucose: step 2/4. Catalyzes the reversible isomerization of glucose-6-phosphate to fructose-6-phosphate. In Salmonella paratyphi C (strain RKS4594), this protein is Glucose-6-phosphate isomerase.